Consider the following 88-residue polypeptide: MDDADPEERNYDNMLKMLSDLNKDLEKLLEEMEKISVQATWMAYDMVVMRTNPTLAESMRRLEDAFVNCKEEMEKNWQELLHETKQRL.

The stretch at 7 to 75 (EERNYDNMLK…FVNCKEEMEK (69 aa)) forms a coiled coil.

As to quaternary structure, homodimer. Can form higher-order homooligomers. Interacts with SYCP1 (via tetrameric core); the interaction remodels SYCP1 homotetramers to 2:1 heterotrimers with SYCE3. SYCP1/SYCE3 heterotrimers form lattice assemblies as part of the mature synaptonemal complex via both lateral and head-to-head interactions. Interacts with the SYCE1-SIX6OS1 complex; the interaction recruits the SYCE1-SIX6OS1 complex to the central element of the synaptonemal complex. Interacts with the SYCE2-TEX12 complex; the interaction promotes fibrous assembly of SYCE2-TEX12 as part of the synaptonemal complex central element. Interacts with SYCE1. Interacts with SYCE2. Interacts with proteasome subunit PSMA8; to participate in meiosis progression during spermatogenesis. Interacts with SPO16.

It is found in the nucleus. The protein localises to the chromosome. In terms of biological role, major component of the transverse central element of synaptonemal complexes (SCS), formed between homologous chromosomes during meiotic prophase. Required for the assembly of the central element of the synaptonemal complex during meiosis, via remodeling of SYCP1 lattice structures and promoting recruitment of SYCE2-TEX12 and SYCE1-SIX60S1 complexes. Required for chromosome loading of the central element-specific SCS proteins, and for initiating synapsis between homologous chromosomes. Chromosome loading appears to require SYCP1. Required for fertility and normal testis development. The sequence is that of Synaptonemal complex central element protein 3 from Homo sapiens (Human).